The chain runs to 315 residues: Aspartate carbamoyltransferase catalytic subunit (315 aa).

Residues R61 and T62 each contribute to the carbamoyl phosphate site. Residue K90 coordinates L-aspartate. Carbamoyl phosphate-binding residues include R111, H139, and Q142. L-aspartate is bound by residues R172 and R234. Carbamoyl phosphate is bound by residues L274 and P275.

It belongs to the aspartate/ornithine carbamoyltransferase superfamily. ATCase family. Heterooligomer of catalytic and regulatory chains.

It carries out the reaction carbamoyl phosphate + L-aspartate = N-carbamoyl-L-aspartate + phosphate + H(+). The protein operates within pyrimidine metabolism; UMP biosynthesis via de novo pathway; (S)-dihydroorotate from bicarbonate: step 2/3. Catalyzes the condensation of carbamoyl phosphate and aspartate to form carbamoyl aspartate and inorganic phosphate, the committed step in the de novo pyrimidine nucleotide biosynthesis pathway. This Hyperthermus butylicus (strain DSM 5456 / JCM 9403 / PLM1-5) protein is Aspartate carbamoyltransferase catalytic subunit.